The following is a 309-amino-acid chain: NAD kinase (309 aa).

Residue aspartate 89 is the Proton acceptor of the active site. NAD(+) is bound by residues aspartate 89–glycine 90, asparagine 163–glutamate 164, arginine 191, aspartate 193, and threonine 204–serine 209.

It belongs to the NAD kinase family. The cofactor is a divalent metal cation.

The protein localises to the cytoplasm. It carries out the reaction NAD(+) + ATP = ADP + NADP(+) + H(+). Its function is as follows. Involved in the regulation of the intracellular balance of NAD and NADP, and is a key enzyme in the biosynthesis of NADP. Catalyzes specifically the phosphorylation on 2'-hydroxyl of the adenosine moiety of NAD to yield NADP. In Shewanella halifaxensis (strain HAW-EB4), this protein is NAD kinase.